The chain runs to 84 residues: Large ribosomal subunit protein bL27 (84 aa).

Positions Met1–Gly22 are disordered.

It belongs to the bacterial ribosomal protein bL27 family.

This chain is Large ribosomal subunit protein bL27, found in Shewanella loihica (strain ATCC BAA-1088 / PV-4).